We begin with the raw amino-acid sequence, 455 residues long: Deoxyribodipyrimidine photo-lyase (455 aa).

A Photolyase/cryptochrome alpha/beta domain is found at 2–131; sequence SVAVVLFTSD…ELHVHDAVVT (130 aa). Residues Tyr-219 and 231 to 235 contribute to the FAD site; that span reads TSRLS. Interaction with DNA stretches follow at residues 266 to 273 and 330 to 331; these read QLAWRDFH and NR. 361–363 contacts FAD; the sequence is DGD. Gln-392 contributes to the DNA binding site.

Belongs to the DNA photolyase class-1 family. As to quaternary structure, monomer. The cofactor is FAD. It depends on coenzyme F420-(gamma-Glu)n as a cofactor.

The catalysed reaction is cyclobutadipyrimidine (in DNA) = 2 pyrimidine residues (in DNA).. Functionally, involved in repair of UV radiation-induced DNA damage. Catalyzes the light-dependent monomerization (300-600 nm) of cyclobutyl pyrimidine dimers (in cis-syn configuration), which are formed between adjacent bases on the same DNA strand upon exposure to ultraviolet radiation. The chain is Deoxyribodipyrimidine photo-lyase (phr) from Streptomyces griseus.